A 1718-amino-acid chain; its full sequence is PR domain zinc finger protein 2 (1718 aa).

In terms of domain architecture, SET spans glutamate 28 to asparagine 141. Residues glutamate 155 to serine 335 form a disordered region. The span at alanine 159–lysine 173 shows a compositional bias: basic residues. Positions glutamine 189–methionine 202 are enriched in polar residues. The segment covering aspartate 204 to proline 216 has biased composition (basic and acidic residues). A compositionally biased stretch (acidic residues) spans aspartate 265–alanine 297. Residues glutamate 294–proline 316 are retinoblastoma protein binding. A compositionally biased stretch (basic and acidic residues) spans serine 304 to serine 327. A Glycyl lysine isopeptide (Lys-Gly) (interchain with G-Cter in SUMO2) cross-link involves residue lysine 347. 2 consecutive C2H2-type zinc fingers follow at residues phenylalanine 360 to histidine 382 and phenylalanine 390 to histidine 412. A disordered region spans residues arginine 405 to isoleucine 457. Serine 421 carries the post-translational modification Phosphoserine. Residues histidine 483–histidine 506 form a C2H2-type 3 zinc finger. Disordered stretches follow at residues lysine 513–alanine 550 and glutamate 622–valine 660. Serine 643 bears the Phosphoserine mark. Residues lysine 651, lysine 690, and lysine 692 each participate in a glycyl lysine isopeptide (Lys-Gly) (interchain with G-Cter in SUMO2) cross-link. Residues threonine 729–proline 797 are disordered. Residues serine 738 to proline 748 show a composition bias toward low complexity. Phosphoserine is present on serine 743. Lysine 774 participates in a covalent cross-link: Glycyl lysine isopeptide (Lys-Gly) (interchain with G-Cter in SUMO2). Phosphoserine occurs at positions 781, 785, and 796. Residues lysine 866 and lysine 879 each participate in a glycyl lysine isopeptide (Lys-Gly) (interchain with G-Cter in SUMO2) cross-link. The tract at residues valine 903–serine 1083 is disordered. A compositionally biased stretch (low complexity) spans leucine 951–aspartate 969. Short sequence motifs (SH3-binding) lie at residues proline 970–valine 979 and proline 985–proline 998. Residues proline 970–alanine 997 are compositionally biased toward pro residues. Low complexity predominate over residues serine 1018 to valine 1027. A compositionally biased stretch (pro residues) spans serine 1028 to glutamate 1038. The short motif at serine 1028–serine 1052 is the SH3-binding element. A compositionally biased stretch (low complexity) spans serine 1042–serine 1072. 3 consecutive C2H2-type zinc fingers follow at residues phenylalanine 1134–histidine 1156, phenylalanine 1162–histidine 1185, and phenylalanine 1191–histidine 1214. Residues lysine 1147 and lysine 1151 each participate in a glycyl lysine isopeptide (Lys-Gly) (interchain with G-Cter in SUMO2) cross-link. A disordered region spans residues histidine 1244–serine 1265. Over residues aspartate 1251 to serine 1265 the composition is skewed to acidic residues. Glycyl lysine isopeptide (Lys-Gly) (interchain with G-Cter in SUMO2) cross-links involve residues lysine 1257 and lysine 1281. The segment at isoleucine 1333–cysteine 1355 adopts a C2H2-type 7; atypical zinc-finger fold. The segment at histidine 1455–cysteine 1478 adopts a C2H2-type 8; atypical zinc-finger fold. 3 disordered regions span residues cysteine 1478–serine 1576, glycine 1589–histidine 1612, and lysine 1625–serine 1652. A compositionally biased stretch (basic residues) spans proline 1486–glycine 1498. Residues histidine 1499–serine 1511 are compositionally biased toward low complexity. Composition is skewed to polar residues over residues glutamine 1525–asparagine 1556 and histidine 1599–serine 1608. The span at aspartate 1635–serine 1645 shows a compositional bias: basic and acidic residues.

It belongs to the class V-like SAM-binding methyltransferase superfamily. As to quaternary structure, binds to the retinoblastoma protein (RB). Interacts with GATA3. As to expression, highly expressed in retinoblastoma cell lines and in brain tumors. Also expressed in a number of other cell lines and in brain, heart, skeletal muscle, liver and spleen. Isoform 1 is expressed in testis at much higher level than isoform 3.

The protein resides in the nucleus. It carries out the reaction L-lysyl(9)-[histone H3] + 3 S-adenosyl-L-methionine = N(6),N(6),N(6)-trimethyl-L-lysyl(9)-[histone H3] + 3 S-adenosyl-L-homocysteine + 3 H(+). In terms of biological role, S-adenosyl-L-methionine-dependent histone methyltransferase that specifically methylates 'Lys-9' of histone H3. May function as a DNA-binding transcription factor. Binds to the macrophage-specific TPA-responsive element (MTE) of the HMOX1 (heme oxygenase 1) gene and may act as a transcriptional activator of this gene. This Homo sapiens (Human) protein is PR domain zinc finger protein 2 (PRDM2).